Here is a 152-residue protein sequence, read N- to C-terminus: Transcriptional regulator MraZ (152 aa).

SpoVT-AbrB domains lie at 5–52 and 81–124; these read ATLV…PLPA and ASEC…DEQT.

Belongs to the MraZ family. Forms oligomers.

The protein localises to the cytoplasm. It is found in the nucleoid. Its function is as follows. Negatively regulates its own expression and that of the subsequent genes in the proximal part of the division and cell wall (dcw) gene cluster. Acts by binding directly to DNA. May also regulate the expression of genes outside the dcw cluster. The protein is Transcriptional regulator MraZ of Sodalis glossinidius (strain morsitans).